Consider the following 323-residue polypeptide: MGGQVSASNSFSRLHCRNANEDWMSALCPRLWDVPLHHLSIPGSHDTMTYCLNKKSPISHEESRLLQLLNKALPCITRPVVLKWSVTQALDVTEQLDAGVRYLDLRIAHMLEGSEKNLHFVHMVYTTALVEDTLTEISEWLERHPREVVILACRNFEGLSEDLHEYLVACIKNIFGDMLCPRGEVPTLRQLWSRGQQVIVSYEDESSLRRHHELWPGVPYWWGNRVKTEALIRYLETMKSCGRPGGLFVAGINLTENLQYVLAHPSESLEKMTLPNLPRLSAWVREQCPGPGSRCTNIIAGDFIGADGFVSDVIALNQKLLWC.

Residues 30–206 (RLWDVPLHHL…QVIVSYEDES (177 aa)) form the PI-PLC X-box domain.

Widely expressed.

The protein resides in the cytoplasm. The chain is PI-PLC X domain-containing protein 1 (PLCXD1) from Homo sapiens (Human).